The primary structure comprises 260 residues: Hemin import ATP-binding protein HmuV (260 aa).

Residues 2 to 239 (IRAENITLIR…ETIARVYGIG (238 aa)) form the ABC transporter domain. Position 34–41 (34–41 (GPNGAGKS)) interacts with ATP.

This sequence belongs to the ABC transporter superfamily. Heme (hemin) importer (TC 3.A.1.14.5) family. The complex is composed of two ATP-binding proteins (HmuV), two transmembrane proteins (HmuU) and a solute-binding protein (HmuT).

Its subcellular location is the cell inner membrane. Functionally, part of the ABC transporter complex HmuTUV involved in hemin import. Responsible for energy coupling to the transport system. In Agrobacterium fabrum (strain C58 / ATCC 33970) (Agrobacterium tumefaciens (strain C58)), this protein is Hemin import ATP-binding protein HmuV.